Consider the following 533-residue polypeptide: Undecaprenyl phosphate-alpha-4-amino-4-deoxy-L-arabinose arabinosyl transferase (533 aa).

The next 13 helical transmembrane spans lie at 10–30 (LLLA…GLWI), 64–84 (PAGY…LFGV), 86–106 (IASA…AGKI), 113–133 (SFAS…AGYS), 137–157 (PQFT…VHSI), 170–190 (VACG…PAII), 207–227 (FGPL…LAVH), 257–277 (WWFY…LLPV), 290–310 (DTAF…LSKG), 312–332 (LPTY…DALV), 345–365 (VNGI…IYVQ), 377–397 (HLLL…LQGI), and 402–422 (FWAL…AALP).

It belongs to the glycosyltransferase 83 family.

It is found in the cell inner membrane. It carries out the reaction 4-amino-4-deoxy-alpha-L-arabinopyranosyl di-trans,octa-cis-undecaprenyl phosphate + lipid IVA = lipid IIA + di-trans,octa-cis-undecaprenyl phosphate.. It functions in the pathway lipopolysaccharide metabolism; 4-amino-4-deoxy-beta-L-arabinose-lipid A biosynthesis. Catalyzes the transfer of the L-Ara4N moiety of the glycolipid undecaprenyl phosphate-alpha-L-Ara4N to lipid A. The modified arabinose is attached to lipid A and is required for resistance to polymyxin and cationic antimicrobial peptides. The polypeptide is Undecaprenyl phosphate-alpha-4-amino-4-deoxy-L-arabinose arabinosyl transferase (Pseudomonas savastanoi pv. phaseolicola (strain 1448A / Race 6) (Pseudomonas syringae pv. phaseolicola (strain 1448A / Race 6))).